Consider the following 411-residue polypeptide: Na(+)-translocating NADH-quinone reductase subunit F (411 aa).

A helical transmembrane segment spans residues 5–25 (VILALGIAAFTVIVLVLVAII). A 2Fe-2S ferredoxin-type domain is found at 36–130 (GDITIDINDD…NMEVELPEEI (95 aa)). Positions 73, 79, 82, and 114 each coordinate [2Fe-2S] cluster. The region spanning 133–273 (VKKWECTVIS…SGPFGEFFAK (141 aa)) is the FAD-binding FR-type domain.

The protein belongs to the NqrF family. Composed of six subunits; NqrA, NqrB, NqrC, NqrD, NqrE and NqrF. Requires [2Fe-2S] cluster as cofactor. FAD serves as cofactor.

The protein resides in the cell inner membrane. It catalyses the reaction a ubiquinone + n Na(+)(in) + NADH + H(+) = a ubiquinol + n Na(+)(out) + NAD(+). In terms of biological role, NQR complex catalyzes the reduction of ubiquinone-1 to ubiquinol by two successive reactions, coupled with the transport of Na(+) ions from the cytoplasm to the periplasm. The first step is catalyzed by NqrF, which accepts electrons from NADH and reduces ubiquinone-1 to ubisemiquinone by a one-electron transfer pathway. This is Na(+)-translocating NADH-quinone reductase subunit F from Haemophilus influenzae (strain PittGG).